The following is a 144-amino-acid chain: Sirohydrochlorin cobaltochelatase (144 aa).

The active-site Proton acceptor is His9. His9 lines the Co(2+) pocket. His9 is a Ni(2+) binding site. Residues Glu45 and 70-75 (LAPGNH) contribute to the substrate site. His75 serves as a coordination point for Co(2+). Residue His75 participates in Ni(2+) binding. The disordered stretch occupies residues 89–112 (GDDEGGHHHHHDHEHHHHHHDTTA). Over residues 95–108 (HHHHHDHEHHHHHH) the composition is skewed to basic residues.

Belongs to the CbiX family. CbiXS subfamily. In terms of assembly, homotetramer; dimer of dimers.

The catalysed reaction is Co-sirohydrochlorin + 2 H(+) = sirohydrochlorin + Co(2+). It catalyses the reaction Ni-sirohydrochlorin + 2 H(+) = sirohydrochlorin + Ni(2+). Its pathway is cofactor biosynthesis; adenosylcobalamin biosynthesis; cob(II)yrinate a,c-diamide from sirohydrochlorin (anaerobic route): step 1/10. Catalyzes the insertion of Co(2+) into sirohydrochlorin as part of the anaerobic pathway to cobalamin biosynthesis. Involved in the biosynthesis of the unique nickel-containing tetrapyrrole coenzyme F430, the prosthetic group of methyl-coenzyme M reductase (MCR), which plays a key role in methanogenesis and anaerobic methane oxidation. Catalyzes the insertion of Ni(2+) into sirohydrochlorin to yield Ni-sirohydrochlorin. The polypeptide is Sirohydrochlorin cobaltochelatase (Methanococcus maripaludis (strain DSM 14266 / JCM 13030 / NBRC 101832 / S2 / LL)).